The chain runs to 331 residues: Serpentine receptor class alpha-9 (331 aa).

7 helical membrane-spanning segments follow: residues 26–46 (IDLL…QLVL), 58–78 (LILE…IEAI), 104–124 (YLKV…GLMI), 142–162 (IIGF…GKLF), 189–209 (YFTV…LLKI), 238–258 (VCFL…GVGA), and 275–295 (LCVV…LLLI).

This sequence belongs to the nematode receptor-like protein sra family.

It is found in the membrane. This is Serpentine receptor class alpha-9 (sra-9) from Caenorhabditis elegans.